Reading from the N-terminus, the 439-residue chain is MKTKKFYQHLYFQVLTAISFGVALGYYLPDTGTAMKPLGDGFIKMIKMIITPIIFCTVVTGIAGMDDMKKVGRVGGKALLYFEAVSTLALGIGLVVINIIQPGVGMNADVTKLDTKGLDTYTATAAKGHSFVDFVLGVIPNSVVDAFAKGEILQVLFFAILFGLALSAMGEKGKPVYRLIDEVAHAFFGVVNIIMKFAPIGAFGAMAFTIGKFGLGSLTKLGMLMGSFYLTCLLFVFVVLGTIGKLCGFNIFKFISYIKEELLIVLGTSSSESALPRMMAKLENLGCSKSVVGLVIPTGYSFNLDGTSIYLTMAAVFVAQATNTPLDLTQTLTILGVLMLTSKGAAGVTGSGFVTLAATFAAIPTIPVAGLALILGIDRFMSEARALTNLVGNGVATVVVSRWENELDVARMSQVLNKELDEADGEADLLMMDPEPEEA.

9 helical membrane passes run 9–29 (HLYF…YYLP), 45–65 (MIKM…IAGM), 80–100 (LYFE…INII), 150–170 (GEIL…SAMG), 186–206 (AFFG…FGAM), 221–241 (LGML…VVLG), 291–311 (VVGL…SIYL), 334–354 (ILGV…SGFV), and 357–377 (AATF…ILGI).

Belongs to the dicarboxylate/amino acid:cation symporter (DAACS) (TC 2.A.23) family.

The protein resides in the cell inner membrane. Functionally, responsible for the transport of dicarboxylates such as succinate, fumarate, and malate from the periplasm across the membrane. The polypeptide is C4-dicarboxylate transport protein (Geobacter sp. (strain M21)).